A 190-amino-acid polypeptide reads, in one-letter code: MKHHSLIFLTGFSGSGKSTIGPLLANSLGYDFIDLDQAIEAITGKSVSRIFAEEGESYFRKLELDTLKTVTNREELIVSLGGGALESNECYTLIKEKGTLVYLKSGSGTLTKRLCHKTDRPLLKSEQGGKLSNGEIEQKIRELLARREPRYNSATITVQTDTGRIGSTVEELTRKINRYVRKTTGNSRAK.

14 to 19 (GSGKST) contributes to the ATP binding site. Position 18 (S18) interacts with Mg(2+). Substrate contacts are provided by D36, R60, and G82. ATP is bound at residue R120. R147 contacts substrate.

It belongs to the shikimate kinase family. In terms of assembly, monomer. Mg(2+) is required as a cofactor.

Its subcellular location is the cytoplasm. The catalysed reaction is shikimate + ATP = 3-phosphoshikimate + ADP + H(+). It functions in the pathway metabolic intermediate biosynthesis; chorismate biosynthesis; chorismate from D-erythrose 4-phosphate and phosphoenolpyruvate: step 5/7. Catalyzes the specific phosphorylation of the 3-hydroxyl group of shikimic acid using ATP as a cosubstrate. The sequence is that of Shikimate kinase from Chlorobium phaeobacteroides (strain DSM 266 / SMG 266 / 2430).